A 477-amino-acid chain; its full sequence is Glycogen synthase (477 aa).

Lys-15 lines the ADP-alpha-D-glucose pocket.

It belongs to the glycosyltransferase 1 family. Bacterial/plant glycogen synthase subfamily.

The catalysed reaction is [(1-&gt;4)-alpha-D-glucosyl](n) + ADP-alpha-D-glucose = [(1-&gt;4)-alpha-D-glucosyl](n+1) + ADP + H(+). The protein operates within glycan biosynthesis; glycogen biosynthesis. In terms of biological role, synthesizes alpha-1,4-glucan chains using ADP-glucose. The sequence is that of Glycogen synthase from Salmonella typhi.